The chain runs to 84 residues: Putative membrane protein insertion efficiency factor (84 aa).

A disordered region spans residues 64-84; sequence GGSGYDPPPPRHQPRKWKCEE. Residues 75–84 are compositionally biased toward basic residues; that stretch reads HQPRKWKCEE.

Belongs to the UPF0161 family.

The protein localises to the cell inner membrane. Its function is as follows. Could be involved in insertion of integral membrane proteins into the membrane. This chain is Putative membrane protein insertion efficiency factor, found in Caulobacter vibrioides (strain ATCC 19089 / CIP 103742 / CB 15) (Caulobacter crescentus).